The sequence spans 165 residues: Small ribosomal subunit protein uS5 (165 aa).

The 64-residue stretch at 10-73 (LKEKVVHINR…EDAKKNIVEV (64 aa)) folds into the S5 DRBM domain.

This sequence belongs to the universal ribosomal protein uS5 family. Part of the 30S ribosomal subunit. Contacts proteins S4 and S8.

In terms of biological role, with S4 and S12 plays an important role in translational accuracy. Located at the back of the 30S subunit body where it stabilizes the conformation of the head with respect to the body. This is Small ribosomal subunit protein uS5 from Clostridium botulinum (strain ATCC 19397 / Type A).